A 488-amino-acid polypeptide reads, in one-letter code: Glutamyl-tRNA(Gln) amidotransferase subunit A (488 aa).

Active-site charge relay system residues include Lys-77 and Ser-152. Ser-176 (acyl-ester intermediate) is an active-site residue.

This sequence belongs to the amidase family. GatA subfamily. Heterotrimer of A, B and C subunits.

It carries out the reaction L-glutamyl-tRNA(Gln) + L-glutamine + ATP + H2O = L-glutaminyl-tRNA(Gln) + L-glutamate + ADP + phosphate + H(+). Functionally, allows the formation of correctly charged Gln-tRNA(Gln) through the transamidation of misacylated Glu-tRNA(Gln) in organisms which lack glutaminyl-tRNA synthetase. The reaction takes place in the presence of glutamine and ATP through an activated gamma-phospho-Glu-tRNA(Gln). This Streptococcus equi subsp. zooepidemicus (strain H70) protein is Glutamyl-tRNA(Gln) amidotransferase subunit A.